We begin with the raw amino-acid sequence, 308 residues long: UPF0026 protein HP_0117 (308 aa).

Residues 18–248 form the Radical SAM core domain; it reads FGKSLGVDLS…SLPKRSITQA (231 aa). 3 residues coordinate [4Fe-4S] cluster: cysteine 33, cysteine 37, and cysteine 40.

The protein belongs to the UPF0026 family. [4Fe-4S] cluster is required as a cofactor.

The protein is UPF0026 protein HP_0117 of Helicobacter pylori (strain ATCC 700392 / 26695) (Campylobacter pylori).